We begin with the raw amino-acid sequence, 259 residues long: Putative deoxyribonuclease TATDN1 homolog (259 aa).

The a divalent metal cation site is built by E82, H116, H138, and D186.

This sequence belongs to the metallo-dependent hydrolases superfamily. TatD-type hydrolase family. Requires a divalent metal cation as cofactor.

It localises to the nucleus. Functionally, putative deoxyribonuclease. The polypeptide is Putative deoxyribonuclease TATDN1 homolog (Vairimorpha ceranae (strain BRL01) (Microsporidian parasite)).